Consider the following 190-residue polypeptide: Imidazole glycerol phosphate synthase subunit HisH (190 aa).

Residues 2–190 enclose the Glutamine amidotransferase type-1 domain; that stretch reads IVGVVDYTVG…IKRFLAVAKR (189 aa). C73 acts as the Nucleophile in catalysis. Residues H169 and E171 contribute to the active site.

Heterodimer of HisH and HisF.

Its subcellular location is the cytoplasm. The catalysed reaction is 5-[(5-phospho-1-deoxy-D-ribulos-1-ylimino)methylamino]-1-(5-phospho-beta-D-ribosyl)imidazole-4-carboxamide + L-glutamine = D-erythro-1-(imidazol-4-yl)glycerol 3-phosphate + 5-amino-1-(5-phospho-beta-D-ribosyl)imidazole-4-carboxamide + L-glutamate + H(+). It catalyses the reaction L-glutamine + H2O = L-glutamate + NH4(+). It participates in amino-acid biosynthesis; L-histidine biosynthesis; L-histidine from 5-phospho-alpha-D-ribose 1-diphosphate: step 5/9. Its function is as follows. IGPS catalyzes the conversion of PRFAR and glutamine to IGP, AICAR and glutamate. The HisH subunit catalyzes the hydrolysis of glutamine to glutamate and ammonia as part of the synthesis of IGP and AICAR. The resulting ammonia molecule is channeled to the active site of HisF. The chain is Imidazole glycerol phosphate synthase subunit HisH from Pyrobaculum aerophilum (strain ATCC 51768 / DSM 7523 / JCM 9630 / CIP 104966 / NBRC 100827 / IM2).